Consider the following 640-residue polypeptide: MVQSELQLQPRAGGRAEAASWGDRGNDKGGLGNPDMPSVSPGPQRPPKLSSLAYDSPPDYLQTVSHPEVYRVLFDYQPEAPDELALRRGDVVKVLSKTTEDKGWWEGECQGRRGVFPDNFVLPPPPIKKLVPRKVVSRESAPIKEPKKLMPKTSLPTVKKLATATTGPSKAKTSRTPSRDSQKLTSRDSGPNGGFQSGGSYHPGRKRSKTQTPQQRSVSSQEEEHSSPVKAPSVKRTPMPDKTATPERPPAPENAPSSKKIPAPDKVPSPEKTLTLGDKASIPGNSTSGKIPAPDKVPTPEKMVTPEDKASIPENSIIPEETLTVDKPSTPERVFSVEESPALEAPPMDKVPNPKMAPLGDEAPTLEKVLTPELSEEEVSTRDDIQFHHFSSEEALQKVKYFVAKEDPSSQEEAHTPEAPPPQPPSSERCLGEMKCTLVRGDSSPRQAELKSGPASRPALEKPHPHEEATTLPEEAPSNDERTPEEEAPPNEQRPLREEVLPKEGVASKEEVTLKEELPPKEEVAPKEEVPPIERAFAQKTRPIKPPPDSQETLALPSLVPQNYTENKNEGVDVTSLRGEVESLRRALELMEVQLERKLTDIWEELKSEKEQRRRLEVQVMQGTQKSQTPRVIHTQTQTY.

The segment at 1–60 (MVQSELQLQPRAGGRAEAASWGDRGNDKGGLGNPDMPSVSPGPQRPPKLSSLAYDSPPDY) is disordered. The 62-residue stretch at 65–126 (SHPEVYRVLF…PDNFVLPPPP (62 aa)) folds into the SH3 domain. 3 disordered regions span residues 133–361 (RKVV…PLGD), 401–551 (YFVA…PDSQ), and 618–640 (VQVM…TQTY). Basic and acidic residues predominate over residues 177 to 186 (PSRDSQKLTS). The segment covering 210–220 (TQTPQQRSVSS) has biased composition (polar residues). 3 stretches are compositionally biased toward basic and acidic residues: residues 401–416 (YFVA…EAHT), 459–469 (ALEKPHPHEEA), and 494–532 (RPLR…EVPP). The stretch at 572 to 626 (VDVTSLRGEVESLRRALELMEVQLERKLTDIWEELKSEKEQRRRLEVQVMQGTQK) forms a coiled coil. A compositionally biased stretch (polar residues) spans 621–640 (MQGTQKSQTPRVIHTQTQTY).

In Homo sapiens (Human), this protein is SH3 domain-containing protein 21 (SH3D21).